The following is a 382-amino-acid chain: Mannitol-1-phosphate 5-dehydrogenase (382 aa).

3–14 is a binding site for NAD(+); the sequence is ALHFGAGNIGRG. Residue Lys269 is modified to N6-acetyllysine.

Belongs to the mannitol dehydrogenase family. As to quaternary structure, monomer.

The catalysed reaction is D-mannitol 1-phosphate + NAD(+) = beta-D-fructose 6-phosphate + NADH + H(+). The polypeptide is Mannitol-1-phosphate 5-dehydrogenase (Escherichia coli O157:H7).